Here is a 92-residue protein sequence, read N- to C-terminus: Small ribosomal subunit protein uS19 (92 aa).

Belongs to the universal ribosomal protein uS19 family.

Functionally, protein S19 forms a complex with S13 that binds strongly to the 16S ribosomal RNA. This chain is Small ribosomal subunit protein uS19, found in Jannaschia sp. (strain CCS1).